The sequence spans 226 residues: uncharacterized protein (226 aa).

Belongs to the mimivirus L246/L426 family.

This is an uncharacterized protein from Acanthamoeba polyphaga mimivirus (APMV).